Consider the following 414-residue polypeptide: Tryptophan synthase beta chain (414 aa).

Residues 1-26 (MVSTFSRQDQNYKNDDLNQPSKEGRF) form a disordered region. Basic and acidic residues predominate over residues 10 to 26 (QNYKNDDLNQPSKEGRF). Lys-109 bears the N6-(pyridoxal phosphate)lysine mark.

This sequence belongs to the TrpB family. In terms of assembly, tetramer of two alpha and two beta chains. Pyridoxal 5'-phosphate serves as cofactor.

The catalysed reaction is (1S,2R)-1-C-(indol-3-yl)glycerol 3-phosphate + L-serine = D-glyceraldehyde 3-phosphate + L-tryptophan + H2O. It participates in amino-acid biosynthesis; L-tryptophan biosynthesis; L-tryptophan from chorismate: step 5/5. Functionally, the beta subunit is responsible for the synthesis of L-tryptophan from indole and L-serine. This Prochlorococcus marinus (strain MIT 9312) protein is Tryptophan synthase beta chain.